The chain runs to 141 residues: Large ribosomal subunit protein uL11 (141 aa).

The protein belongs to the universal ribosomal protein uL11 family. As to quaternary structure, part of the ribosomal stalk of the 50S ribosomal subunit. Interacts with L10 and the large rRNA to form the base of the stalk. L10 forms an elongated spine to which L12 dimers bind in a sequential fashion forming a multimeric L10(L12)X complex. Post-translationally, one or more lysine residues are methylated.

Its function is as follows. Forms part of the ribosomal stalk which helps the ribosome interact with GTP-bound translation factors. The chain is Large ribosomal subunit protein uL11 from Opitutus terrae (strain DSM 11246 / JCM 15787 / PB90-1).